A 161-amino-acid polypeptide reads, in one-letter code: Large ribosomal subunit protein uL10 (161 aa).

The protein belongs to the universal ribosomal protein uL10 family. As to quaternary structure, part of the ribosomal stalk of the 50S ribosomal subunit. The N-terminus interacts with L11 and the large rRNA to form the base of the stalk. The C-terminus forms an elongated spine to which L12 dimers bind in a sequential fashion forming a multimeric L10(L12)X complex.

In terms of biological role, forms part of the ribosomal stalk, playing a central role in the interaction of the ribosome with GTP-bound translation factors. This chain is Large ribosomal subunit protein uL10, found in Campylobacter fetus subsp. fetus (strain 82-40).